A 493-amino-acid chain; its full sequence is Guanosine-5'-triphosphate,3'-diphosphate pyrophosphatase (493 aa).

This sequence belongs to the GppA/Ppx family. GppA subfamily.

It carries out the reaction guanosine 3'-diphosphate 5'-triphosphate + H2O = guanosine 3',5'-bis(diphosphate) + phosphate + H(+). Its pathway is purine metabolism; ppGpp biosynthesis; ppGpp from GTP: step 2/2. Catalyzes the conversion of pppGpp to ppGpp. Guanosine pentaphosphate (pppGpp) is a cytoplasmic signaling molecule which together with ppGpp controls the 'stringent response', an adaptive process that allows bacteria to respond to amino acid starvation, resulting in the coordinated regulation of numerous cellular activities. The chain is Guanosine-5'-triphosphate,3'-diphosphate pyrophosphatase from Salmonella agona (strain SL483).